Consider the following 336-residue polypeptide: UDP-3-O-acylglucosamine N-acyltransferase (336 aa).

H233 serves as the catalytic Proton acceptor.

This sequence belongs to the transferase hexapeptide repeat family. LpxD subfamily. In terms of assembly, homotrimer.

The enzyme catalyses a UDP-3-O-[(3R)-3-hydroxyacyl]-alpha-D-glucosamine + a (3R)-hydroxyacyl-[ACP] = a UDP-2-N,3-O-bis[(3R)-3-hydroxyacyl]-alpha-D-glucosamine + holo-[ACP] + H(+). It functions in the pathway bacterial outer membrane biogenesis; LPS lipid A biosynthesis. Functionally, catalyzes the N-acylation of UDP-3-O-acylglucosamine using 3-hydroxyacyl-ACP as the acyl donor. Is involved in the biosynthesis of lipid A, a phosphorylated glycolipid that anchors the lipopolysaccharide to the outer membrane of the cell. The polypeptide is UDP-3-O-acylglucosamine N-acyltransferase (Helicobacter pylori (strain J99 / ATCC 700824) (Campylobacter pylori J99)).